We begin with the raw amino-acid sequence, 682 residues long: MSEPRKILVTSALPYANGSIHLGHMLEYIQTDMWVRFQKHRGNQCIYVCADDAHGSAIMLRAEKEGITPEQLIDNVKAEHSADFADFLVDFDNFHSTHSDENRELSSMIYTRLRDAGHIATRSVTQYFDPEKKMFLADRFIKGTCPKCAAEDQYGDNCEKCGATYAPTDLKNPKSAISGTTPVLKDSKHFFFDLPAFDAMLKSWTRSGTLQDAVANKIAEWLDSGLQQWDISRDAPYFGFEIPDEPGKYFYVWLDAPIGYMASFKNLCARRPDLDFDAYWGKGATTELYHFIGKDIVNFHALFWPAMLEGAGLRTPTGINVHGYLTVNGQKMSKSRGTFIKARTYLDHLPPEYLRYYYASKLGRGVDDLDLNFEDFVQKVNSDLIGKVVNIASRCAGFIHKGNAGVMGEANAAPELTDAFLAAAPSIADAYEARDFARAMRETMALADRANAYIAEKAPWALAKQEGKQDEVQAVCSLGINLFRQLVIFLKPVLPNLAADAEKFLNVEPLTWEDHKTLLGNHQLNPFSALMTRIDPLKVEAMAAASKEDLTATDATASSAPAGNGELAKDPLSAEIDFDAFAAVDLRVALILKAEHVEGADKLLRLTLDIGDEQRNVFSGIKSAYPNPSELEGRLTMMIANLKPRKMRFGISEGMVMAAGPGGEEIYLLSPDSGAKPGQRIK.

The short motif at 14-24 (PYANGSIHLGH) is the 'HIGH' region element. Residues C145, C148, C158, and C161 each coordinate Zn(2+). A 'KMSKS' region motif is present at residues 331 to 335 (KMSKS). K334 contacts ATP. The 103-residue stretch at 580-682 (AFAAVDLRVA…SGAKPGQRIK (103 aa)) folds into the tRNA-binding domain.

This sequence belongs to the class-I aminoacyl-tRNA synthetase family. MetG type 1 subfamily. As to quaternary structure, homodimer. The cofactor is Zn(2+).

The protein resides in the cytoplasm. The enzyme catalyses tRNA(Met) + L-methionine + ATP = L-methionyl-tRNA(Met) + AMP + diphosphate. Is required not only for elongation of protein synthesis but also for the initiation of all mRNA translation through initiator tRNA(fMet) aminoacylation. The polypeptide is Methionine--tRNA ligase (Pseudomonas savastanoi pv. phaseolicola (strain 1448A / Race 6) (Pseudomonas syringae pv. phaseolicola (strain 1448A / Race 6))).